A 467-amino-acid polypeptide reads, in one-letter code: UPF0236 protein TTE0610/TTE0881/TTE1053/TTE2432 (467 aa).

This sequence belongs to the UPF0236 family.

This Caldanaerobacter subterraneus subsp. tengcongensis (strain DSM 15242 / JCM 11007 / NBRC 100824 / MB4) (Thermoanaerobacter tengcongensis) protein is UPF0236 protein TTE0610/TTE0881/TTE1053/TTE2432.